The following is a 534-amino-acid chain: Peptide chain release factor 3 (534 aa).

The tr-type G domain occupies 9–278 (ARRRTFAIIS…FFVEHAPSPQ (270 aa)). Residues 18–25 (SHPDAGKT), 86–90 (DTPGH), and 140–143 (NKLD) each bind GTP.

It belongs to the TRAFAC class translation factor GTPase superfamily. Classic translation factor GTPase family. PrfC subfamily.

The protein resides in the cytoplasm. Functionally, increases the formation of ribosomal termination complexes and stimulates activities of RF-1 and RF-2. It binds guanine nucleotides and has strong preference for UGA stop codons. It may interact directly with the ribosome. The stimulation of RF-1 and RF-2 is significantly reduced by GTP and GDP, but not by GMP. This Xylella fastidiosa (strain M12) protein is Peptide chain release factor 3.